The following is a 435-amino-acid chain: Nuclear receptor subfamily 6 group A member 1 (435 aa).

The segment at residues 11–86 (QRACLICGDR…MGMNRKAIRE (76 aa)) is a DNA-binding region (nuclear receptor). 2 NR C4-type zinc fingers span residues 14 to 34 (CLIC…CEGC) and 50 to 69 (CSRD…CQYC). Residues 84-157 (IREDGMPGGR…VSTPSSSRSM (74 aa)) are disordered. Residues 121-141 (NTSWSNNGDSDHSSPGNGVSE) are compositionally biased toward polar residues. The span at 142–156 (SNQPSPVSTPSSSRS) shows a compositional bias: low complexity. The NR LBD domain occupies 204 to 435 (QSHTLINQLL…HSCKTSLTKE (232 aa)).

The protein belongs to the nuclear hormone receptor family. NR6 subfamily. In terms of assembly, homodimer.

Its subcellular location is the cytoplasm. The protein resides in the nucleus. Functionally, probable orphan nuclear receptor. Binds to a response element containing repeats of the motif 5'-AGGTCA-3'. Required for anterior-posterior patterning during organogenesis. Acts with chordin to play a role in patterning the midbrain-hindbrain. Isoform Em is required for integrin-mediated cell matrix interaction during neurulation and for the morphogenetic movements leading to formation of the neural tube. Also mediates the effect of retinoic acid on primary neurogenesis. This is Nuclear receptor subfamily 6 group A member 1 from Xenopus tropicalis (Western clawed frog).